We begin with the raw amino-acid sequence, 488 residues long: MSITKPETTVLKNYIGGQWVASSGTETLEVPNPATGEVLARVPISTKEDVDQAVQAAKKAFATWKDVPVPKRARIMFSFHHLLNQHHEELAELVVQENGKAYKEAYGEIQRGIECVEFAAGAPTLLMGESLSNIAEEIDSEMFRYPLGVVAGITPFNFPMMVPLWMFPLAIVCGNTFVLKPSERTPILANKLAELFTEAGAPPGVLNVVHGAHEVVNALIDHEDIRAISFVGSQPVAKYVYERTAAQGKRVQALSGAKNHHIVMPDADVETAVQHVISSAFGSAGQRCMACSAVVIVGENETFVRRLKQKADELIIGNGMDPEVLLTPVIRQSHREKVLGYIQKGIEEGAVLLRDGRKEMDDRPEGNFLGPTIFDYVTPDMTIAKEEIFAPVLSLLRANDLDEALSYIRKSRYGNGATIYTKDAKAVRKFREEADAGMLGINVGVPATMAFFPFSGWKDSFYGDLHVNGKDGVNFYTRKKMITSRFDF.

Residues Phe-156, Lys-180, Glu-183, Arg-184, Ser-233, and Ser-255 each contribute to the NAD(+) site. The Nucleophile role is filled by Cys-288. An NAD(+)-binding site is contributed by Glu-387.

It belongs to the aldehyde dehydrogenase family. IolA subfamily. In terms of assembly, homotetramer.

The enzyme catalyses 3-oxopropanoate + NAD(+) + CoA + H2O = hydrogencarbonate + acetyl-CoA + NADH + H(+). The catalysed reaction is 2-methyl-3-oxopropanoate + NAD(+) + CoA + H2O = propanoyl-CoA + hydrogencarbonate + NADH + H(+). It functions in the pathway polyol metabolism; myo-inositol degradation into acetyl-CoA; acetyl-CoA from myo-inositol: step 7/7. In terms of biological role, catalyzes the oxidation of malonate semialdehyde (MSA) and methylmalonate semialdehyde (MMSA) into acetyl-CoA and propanoyl-CoA, respectively. Is involved in a myo-inositol catabolic pathway. Bicarbonate, and not CO2, is the end-product of the enzymatic reaction. The protein is Malonate-semialdehyde dehydrogenase 1 of Geobacillus kaustophilus (strain HTA426).